We begin with the raw amino-acid sequence, 239 residues long: Prolactin-8A4 (239 aa).

The first 31 residues, 1 to 31, serve as a signal peptide directing secretion; that stretch reads MMKLALSQPPFSGTLLMLVVSILLLWEKAAS. 2 disulfides stabilise this stretch: Cys-35/Cys-42 and Cys-102/Cys-215. Residues Asn-211 and Asn-218 are each glycosylated (N-linked (GlcNAc...) asparagine). Cys-232 and Cys-239 are joined by a disulfide.

It belongs to the somatotropin/prolactin family. Placental basal zone cells.

The protein resides in the secreted. The protein is Prolactin-8A4 (Prl8a4) of Rattus norvegicus (Rat).